A 194-amino-acid chain; its full sequence is E3 ubiquitin-protein ligase RNF4 (194 aa).

Residues methionine 1–glycine 12 are compositionally biased toward basic residues. The segment at methionine 1–threonine 20 is required for ubiquitination activity. Residues methionine 1–proline 39 form a disordered region. Positions proline 6 to leucine 65 are mediates interaction with TRPS1. Residues isoleucine 40–valine 43 carry the SUMO interaction motif 1; mediates the binding to polysumoylated substrates motif. The short motif at isoleucine 50 to leucine 53 is the SUMO interaction motif 2; mediates the binding to polysumoylated substrates element. The SUMO interaction motif 3; mediates the binding to polysumoylated substrates motif lies at valine 61–valine 63. An SUMO interaction motif 4; mediates the binding to polysumoylated substrates motif is present at residues valine 71–valine 74. A phosphoserine mark is found at serine 98 and serine 99. The disordered stretch occupies residues valine 110–proline 130. The Zn(2+) site is built by cysteine 136, cysteine 139, cysteine 158, histidine 160, cysteine 163, cysteine 166, cysteine 177, and cysteine 180. An RING-type zinc finger spans residues cysteine 136–arginine 181.

In terms of assembly, homodimer (via RING-type zinc finger domain). Interacts with GSC2. Interacts with AR/the androgen receptor and TBP. Interacts with TCF20. Interacts with PATZ1. Interacts with TRPS1; negatively regulates TRPS1 transcriptional repressor activity. Interacts with PML (isoform PML-1, isoform PML-2, isoform PML-3, isoform PML-4, isoform PML-5 and isoform PML-6). Interacts with PRDM1/Blimp-1. Sumoylated; conjugated by one or two SUMO1 moieties. In terms of processing, autoubiquitinated. In the embryo, expressed primarily in the developing nervous system with strong expression in the dorsal root ganglia and gonads. Ubiquitously expressed in the adult.

It is found in the cytoplasm. It localises to the nucleus. The protein localises to the PML body. The enzyme catalyses S-ubiquitinyl-[E2 ubiquitin-conjugating enzyme]-L-cysteine + [acceptor protein]-L-lysine = [E2 ubiquitin-conjugating enzyme]-L-cysteine + N(6)-ubiquitinyl-[acceptor protein]-L-lysine.. It participates in protein modification; protein ubiquitination. Functionally, E3 ubiquitin-protein ligase which binds polysumoylated chains covalently attached to proteins and mediates 'Lys-6'-, 'Lys-11'-, 'Lys-48'- and 'Lys-63'-linked polyubiquitination of those substrates and their subsequent targeting to the proteasome for degradation. Regulates the degradation of several proteins including PML and the transcriptional activator PEA3. Involved in chromosome alignment and spindle assembly, it regulates the kinetochore CENPH-CENPI-CENPK complex by targeting polysumoylated CENPI to proteasomal degradation. Regulates the cellular responses to hypoxia and heat shock through degradation of respectively EPAS1 and PARP1. Alternatively, it may also bind DNA/nucleosomes and have a more direct role in the regulation of transcription for instance enhancing basal transcription and steroid receptor-mediated transcriptional activation. Catalyzes ubiquitination of sumoylated PARP1 in response to PARP1 trapping to chromatin, leading to PARP1 removal from chromatin by VCP/p97. The protein is E3 ubiquitin-protein ligase RNF4 of Mus musculus (Mouse).